We begin with the raw amino-acid sequence, 117 residues long: UPF0122 protein Teth514_1714 (117 aa).

It belongs to the UPF0122 family.

Functionally, might take part in the signal recognition particle (SRP) pathway. This is inferred from the conservation of its genetic proximity to ftsY/ffh. May be a regulatory protein. This is UPF0122 protein Teth514_1714 from Thermoanaerobacter sp. (strain X514).